A 79-amino-acid chain; its full sequence is Hematopoietic cell signal transducer (79 aa).

A signal peptide spans 1–18 (MAPPGHLLFLFLLPVAAS). The Extracellular portion of the chain corresponds to 19–35 (QTNEGSCSGCGPLSLPL). A helical membrane pass occupies residues 36–56 (LAGLVAADAVMSLLIVGVVFV). Residues 57–79 (CMRLHSRPAQEDGRVYINMPGRG) are Cytoplasmic-facing. A Phosphotyrosine modification is found at Y72. The tract at residues 72-74 (YIN) is GRB2 binding site. The PIK3R1 binding site stretch occupies residues 72 to 75 (YINM).

It belongs to the DAP10 family. Homodimer; Disulfide-linked. Heterohexamer composed of four subunits of HCST/DAP10 and two subunits of KLRK1. Interacts (via transmembrane domain) with KLRK1 (via transmembrane domain); the interaction is required for KLRK1 NK cell surface and induces NK cell-mediated cytotoxicity. Interacts with PIK3R1 and GRB2. Interacts with CLEC5A. Forms an CLEC5A/TYROBP/HCST trimolecular complex depending almost solely on TYROBP. Interacts with CD300H. Post-translationally, phosphorylated; PIK3R1 and GRB2 associate specifically with tyrosine-phosphorylated HCST. O-glycosylated.

It localises to the membrane. Transmembrane adapter protein which associates with KLRK1 to form an activation receptor KLRK1-HCST in lymphoid and myeloid cells; this receptor plays a major role in triggering cytotoxicity against target cells expressing cell surface ligands such as MHC class I chain-related MICA and MICB, and UL16-binding proteins (ULBPs); these ligands are up-regulated by stress conditions and pathological state such as viral infection and tumor transformation. Functions as a docking site for PI3-kinase PIK3R1 and GRB2. Interaction of ULBPs with KLRK1-HCST triggers calcium mobilization and activation of the PIK3R1, MAP2K/ERK, and JAK2/STAT5 signaling pathways. Both PIK3R1 and GRB2 are required for full KLRK1-HCST-mediated activation and ultimate killing of target cells. In NK cells, KLRK1-HCST signaling directly induces cytotoxicity and enhances cytokine production initiated via DAP12/TYROBP-associated receptors. In T-cells, it provides primarily costimulation for TCR-induced signals. KLRK1-HCST receptor plays a role in immune surveillance against tumors and is required for cytolysis of tumors cells; indeed, melanoma cells that do not express KLRK1 ligands escape from immune surveillance mediated by NK cells. This Rattus norvegicus (Rat) protein is Hematopoietic cell signal transducer (Hcst).